The sequence spans 613 residues: MGEAFYTVKLERLESHDTEGLSFQEVQKNTYDFECPWKDDEGNSKRVLTLQKENLPGRRDQRDRRAAGNRLIENQLGVSFQSHLPELQQFQGEGKIYEYNQVEKSLSNRGKHYKCDECGKVFNQNSRLTSHKRIHTGEKPYRCNECGKAFTVRSNLTIHQVIHTGEKPYKCNECGKVFSQPSNLAGHQRIHTGEKPYKCNECGKAFRAHSKLTTHQVIHTGEKPYKCNECGKCFTQNSHLASHRRIHTGEKPYKCNECGKAFSVRSSLTTHQTIHTGEKPYKCNECGKVFRHNSYLTKHRRVHTGEKPYKCNECGKAFSMHSNLTKHQIIHTGEKPFKCNECVKVFTQYSHLANHRRIHTGEKPYRCDECGKAFSVRSSLTTHQAIHTGEKPYKCNDCGKVFTQNSHLASHRGIHSGEKPYKCDECGKAFSQTSQLARHWRVHTGEKPYKCNECGKAFSVHSSLTTHQTIHTGQKPYKCNDCGKVFRHNSYLAVHQRIHTGEKPYKCNECGKAFSVHSNLATHQVIHTGEKPYKCNECGKVFTQNSHLANHRRIHTGEKPYRCNECGKAFSVRSTLTTHMAIHTGDKPYKCNECGKVFTQNSNLAKHRRIHSG.

18 consecutive C2H2-type zinc fingers follow at residues 113 to 135 (YKCD…KRIH), 141 to 163 (YRCN…QVIH), 169 to 191 (YKCN…QRIH), 197 to 219 (YKCN…QVIH), 225 to 247 (YKCN…RRIH), 253 to 275 (YKCN…QTIH), 281 to 303 (YKCN…RRVH), 309 to 331 (YKCN…QIIH), 337 to 359 (FKCN…RRIH), 365 to 387 (YRCD…QAIH), 393 to 415 (YKCN…RGIH), 421 to 443 (YKCD…WRVH), 449 to 471 (YKCN…QTIH), 477 to 499 (YKCN…QRIH), 505 to 527 (YKCN…QVIH), 533 to 555 (YKCN…RRIH), 561 to 583 (YRCN…MAIH), and 589 to 611 (YKCN…RRIH).

The protein belongs to the krueppel C2H2-type zinc-finger protein family.

It is found in the nucleus. May be involved in transcriptional regulation. In Pongo abelii (Sumatran orangutan), this protein is Zinc finger protein 665 (ZNF665).